We begin with the raw amino-acid sequence, 739 residues long: DNA ligase (739 aa).

Residues 1–29 are disordered; the sequence is MTANRPALPTRDKAVSDLSATEASDEHAA. NAD(+) is bound by residues 51–55, 100–101, and Glu134; these read DADYD and SL. Residue Lys136 is the N6-AMP-lysine intermediate of the active site. Arg157, Glu194, Lys311, and Lys335 together coordinate NAD(+). Residues Cys440, Cys443, Cys464, and Cys470 each coordinate Zn(2+). The disordered stretch occupies residues 592–612; it reads PTEMEEASEETPPTRRRKPQG. Residues 662 to 739 enclose the BRCT domain; it reads ASTSPVSGKT…TEDEWFDLVG (78 aa).

This sequence belongs to the NAD-dependent DNA ligase family. LigA subfamily. Mg(2+) is required as a cofactor. Mn(2+) serves as cofactor.

It catalyses the reaction NAD(+) + (deoxyribonucleotide)n-3'-hydroxyl + 5'-phospho-(deoxyribonucleotide)m = (deoxyribonucleotide)n+m + AMP + beta-nicotinamide D-nucleotide.. DNA ligase that catalyzes the formation of phosphodiester linkages between 5'-phosphoryl and 3'-hydroxyl groups in double-stranded DNA using NAD as a coenzyme and as the energy source for the reaction. It is essential for DNA replication and repair of damaged DNA. This is DNA ligase from Azorhizobium caulinodans (strain ATCC 43989 / DSM 5975 / JCM 20966 / LMG 6465 / NBRC 14845 / NCIMB 13405 / ORS 571).